A 137-amino-acid polypeptide reads, in one-letter code: Photosystem II reaction center W protein, chloroplastic (137 aa).

The transit peptide at 1–64 directs the protein to the chloroplast; it reads MATITASSSA…ETTTTTNKSM (64 aa). The N-terminal 19 residues, 65–83, are a transit peptide targeting the thylakoid; the sequence is GASLLAAAAAATISNPAMA. Residues 84–103 lie on the Lumenal, thylakoid side of the membrane; that stretch reads LVDERMSTEGTGLPFGLSNN. A helical transmembrane segment spans residues 104–123; it reads LLGWILFGVFGLIWALYFVY. Residues 124–137 lie on the Stromal side of the membrane; it reads ASGLEEDEESGLSL.

Part of the photosystem II complex. PSII is composed of 1 copy each of membrane proteins PsbA, PsbB, PsbC, PsbD, numerous small proteins, at least 3 peripheral proteins of the oxygen-evolving complex and a large number of cofactors. It forms dimeric complexes.

It localises to the plastid. It is found in the chloroplast thylakoid membrane. Stabilizes dimeric photosystem II (PSII). In its absence no dimeric PSII accumulates and there is a reduction of monomeric PSII. This chain is Photosystem II reaction center W protein, chloroplastic, found in Spinacia oleracea (Spinach).